A 367-amino-acid chain; its full sequence is tRNA-specific 2-thiouridylase MnmA (367 aa).

ATP-binding positions include 13–20 and M39; that span reads GLSGGVDS. Positions 99–101 are interaction with target base in tRNA; sequence NPD. The Nucleophile role is filled by C104. Residues C104 and C200 are joined by a disulfide bond. G128 provides a ligand contact to ATP. Residues 150–152 are interaction with tRNA; sequence KDQ. The active-site Cysteine persulfide intermediate is the C200. An interaction with tRNA region spans residues 307–308; that stretch reads RY.

The protein belongs to the MnmA/TRMU family.

It is found in the cytoplasm. It carries out the reaction S-sulfanyl-L-cysteinyl-[protein] + uridine(34) in tRNA + AH2 + ATP = 2-thiouridine(34) in tRNA + L-cysteinyl-[protein] + A + AMP + diphosphate + H(+). In terms of biological role, catalyzes the 2-thiolation of uridine at the wobble position (U34) of tRNA, leading to the formation of s(2)U34. This is tRNA-specific 2-thiouridylase MnmA from Neisseria meningitidis serogroup B (strain ATCC BAA-335 / MC58).